Reading from the N-terminus, the 397-residue chain is Acetate kinase (397 aa).

Position 8 (asparagine 8) interacts with Mg(2+). Lysine 15 provides a ligand contact to ATP. Arginine 89 lines the substrate pocket. Aspartate 146 (proton donor/acceptor) is an active-site residue. Residues 206–210 (HLGNG), 281–283 (DLR), and 329–333 (GIGEN) each bind ATP. Glutamate 382 contacts Mg(2+).

It belongs to the acetokinase family. In terms of assembly, homodimer. The cofactor is Mg(2+). Mn(2+) is required as a cofactor.

The protein resides in the cytoplasm. It carries out the reaction acetate + ATP = acetyl phosphate + ADP. The protein operates within metabolic intermediate biosynthesis; acetyl-CoA biosynthesis; acetyl-CoA from acetate: step 1/2. In terms of biological role, catalyzes the formation of acetyl phosphate from acetate and ATP. Can also catalyze the reverse reaction. The sequence is that of Acetate kinase from Bacillus cytotoxicus (strain DSM 22905 / CIP 110041 / 391-98 / NVH 391-98).